A 372-amino-acid chain; its full sequence is Glutamate 5-kinase (372 aa).

Position 14 (lysine 14) interacts with ATP. The substrate site is built by serine 54, aspartate 141, and asparagine 153. 173 to 174 (TD) lines the ATP pocket. The 79-residue stretch at 280–358 (RGTLVLDDGA…DAIEALLGYV (79 aa)) folds into the PUA domain.

The protein belongs to the glutamate 5-kinase family.

The protein localises to the cytoplasm. The enzyme catalyses L-glutamate + ATP = L-glutamyl 5-phosphate + ADP. Its pathway is amino-acid biosynthesis; L-proline biosynthesis; L-glutamate 5-semialdehyde from L-glutamate: step 1/2. In terms of biological role, catalyzes the transfer of a phosphate group to glutamate to form L-glutamate 5-phosphate. This chain is Glutamate 5-kinase, found in Pseudomonas aeruginosa (strain UCBPP-PA14).